A 709-amino-acid chain; its full sequence is MLNFFAAAPKGFEYSLAQELTEFGATEVKESVAGVYFTASLTLAYRITLWTRLASRIVLVIYKGSCESAEQLYNAAYCVDWPAHFSNKSTFSIDFHGTGGFLNNTQFGALKIKDAIVDRFRDDDIERPNVSRVDAEFKVDAHFRNGVITIAMNFSGPSLHQRGYRSTTGEAPLKENLAANMLVRSGWQASPSTLLDPFCGSGTVLIEAALMAADIAPGLQRSRFGFEHWRRHDKAVWQEIVEEAKARASLGVKRCEIKFYGSDIDSRLVALAKRNAENAGVLELIEFNVADALTIAPPAESGYLITNPPYGERLGNVSELLQLYYQLGDKFKKEFGGWKVAMLCSDIELVSSLKLKADKQMKMFNGALECAFNIYTLHANSTRRDTPVLPDGVDIADIAPAFANRIKKNAKLLEKWAKKEGIDSYRIYDADIPEYNVAVDKYLDYVIIQEYMAPATIPEAVTKRRLSDVLLALPSAIGINPNKMIMKTRERQKGTSQYQKLDERKLELITTEYGAKFKLNLTGYLDTGLFLDHRLTRRLVGQKSKGRRVLNLFSYTGSASVHAALGGAKSVTTVDMSNTYIAWAKDNFALNGLQGKQYEFVQSDCMQWIRDCNEQYDLIFIDPPTFSNSKRMEDSFDVQRDHVNLLSSLVKLLSPTGELVFSNNKRKFKMDIETLTKMNINVTNIDDVTLPMDYKRNPHIHNTWLITHA.

A THUMP domain is found at leucine 43 to phenylalanine 154.

Belongs to the methyltransferase superfamily. RlmKL family.

It localises to the cytoplasm. The catalysed reaction is guanosine(2445) in 23S rRNA + S-adenosyl-L-methionine = N(2)-methylguanosine(2445) in 23S rRNA + S-adenosyl-L-homocysteine + H(+). The enzyme catalyses guanosine(2069) in 23S rRNA + S-adenosyl-L-methionine = N(2)-methylguanosine(2069) in 23S rRNA + S-adenosyl-L-homocysteine + H(+). Specifically methylates the guanine in position 2445 (m2G2445) and the guanine in position 2069 (m7G2069) of 23S rRNA. This Shewanella baltica (strain OS155 / ATCC BAA-1091) protein is Ribosomal RNA large subunit methyltransferase K/L.